Here is a 346-residue protein sequence, read N- to C-terminus: Tetraacyldisaccharide 4'-kinase (346 aa).

Residue 62–69 coordinates ATP; the sequence is TAGGTGKT.

The protein belongs to the LpxK family.

The enzyme catalyses a lipid A disaccharide + ATP = a lipid IVA + ADP + H(+). Its pathway is glycolipid biosynthesis; lipid IV(A) biosynthesis; lipid IV(A) from (3R)-3-hydroxytetradecanoyl-[acyl-carrier-protein] and UDP-N-acetyl-alpha-D-glucosamine: step 6/6. Functionally, transfers the gamma-phosphate of ATP to the 4'-position of a tetraacyldisaccharide 1-phosphate intermediate (termed DS-1-P) to form tetraacyldisaccharide 1,4'-bis-phosphate (lipid IVA). The sequence is that of Tetraacyldisaccharide 4'-kinase from Xanthomonas oryzae pv. oryzae (strain MAFF 311018).